Reading from the N-terminus, the 425-residue chain is Threonylcarbamoyladenosine tRNA methylthiotransferase (425 aa).

One can recognise a Radical SAM core domain in the interval 60-295 (RKNELIEVLS…RSYTRYTDER (236 aa)). [4Fe-4S] cluster contacts are provided by Cys-74, Cys-78, and Cys-81. The TRAM domain occupies 293–355 (DERIGELHRV…KFSMISKPAS (63 aa)). A helical membrane pass occupies residues 362 to 382 (PLSLMHLFPLAVFCLVLITLY).

The protein belongs to the methylthiotransferase family. CDKAL1 subfamily. It depends on [4Fe-4S] cluster as a cofactor.

It localises to the membrane. The enzyme catalyses N(6)-L-threonylcarbamoyladenosine(37) in tRNA + (sulfur carrier)-SH + AH2 + 2 S-adenosyl-L-methionine = 2-methylsulfanyl-N(6)-L-threonylcarbamoyladenosine(37) in tRNA + (sulfur carrier)-H + 5'-deoxyadenosine + L-methionine + A + S-adenosyl-L-homocysteine + 2 H(+). Its function is as follows. Catalyzes the methylthiolation of N6-threonylcarbamoyladenosine (t(6)A), leading to the formation of 2-methylthio-N6-threonylcarbamoyladenosine (ms(2)t(6)A) at position 37 in tRNAs that read codons beginning with adenine. The sequence is that of Threonylcarbamoyladenosine tRNA methylthiotransferase from Caenorhabditis elegans.